The primary structure comprises 691 residues: Pentatricopeptide repeat-containing protein ATP4, chloroplastic (691 aa).

The segment covering 1–17 (MASLPLCRSPSSLLPSW) has biased composition (low complexity). The transit peptide at 1 to 35 (MASLPLCRSPSSLLPSWPHRPISASFNPKNPSSPV) directs the protein to the chloroplast. The segment at 1–76 (MASLPLCRSP…SSNTRFLWVN (76 aa)) is disordered. Positions 24 to 33 (ASFNPKNPSS) are enriched in polar residues. Pro residues predominate over residues 45–56 (PPQPQDPSPPSD). Polar residues predominate over residues 61–76 (GTRPSSSSNTRFLWVN). PPR repeat units lie at residues 163 to 197 (KVIL…GVQP), 198 to 232 (DNAT…GCSP), 233 to 267 (DMLT…KWQL), 268 to 302 (DPVI…GVRP), 303 to 337 (NLVV…QVQP), 338 to 372 (SRAT…AMGI), 373 to 403 (DVML…MKAS), 411 to 445 (DSWS…GFKP), 446 to 480 (NIFV…GIIP), and 546 to 580 (KMPY…GIYA). Residues 592-677 (LHLRGLSVGA…WFLTTNVAAK (86 aa)) enclose the Smr domain.

Belongs to the PPR family. P subfamily.

The protein resides in the plastid. Its subcellular location is the chloroplast stroma. Involved in translation and accumulation of chloroplast ATP synthase subunits. Interacts with the 5'-UTR of the chloroplast bicistronic atpB and atpE mRNA and activates its translation by facilitating ribosome association with the mRNA. Required for accumulation and activity of the chloroplast ATP synthase. Enhances atpA translation and is required for accumulation of specific processed atpF and psaJ transcripts. Required for the stabilization of bicistronic rpl16 and rpl14 mRNAs. The polypeptide is Pentatricopeptide repeat-containing protein ATP4, chloroplastic (Zea mays (Maize)).